The sequence spans 213 residues: ATP-dependent dethiobiotin synthetase BioD (213 aa).

13-18 (GIGKTV) contacts ATP. Residue threonine 17 coordinates Mg(2+). Lysine 33 is a catalytic residue. Residue glutamate 100 coordinates Mg(2+). ATP contacts are provided by residues 100 to 103 (EGAG) and 184 to 186 (PRL).

This sequence belongs to the dethiobiotin synthetase family. In terms of assembly, homodimer. It depends on Mg(2+) as a cofactor.

Its subcellular location is the cytoplasm. The catalysed reaction is (7R,8S)-7,8-diammoniononanoate + CO2 + ATP = (4R,5S)-dethiobiotin + ADP + phosphate + 3 H(+). It functions in the pathway cofactor biosynthesis; biotin biosynthesis; biotin from 7,8-diaminononanoate: step 1/2. Its function is as follows. Catalyzes a mechanistically unusual reaction, the ATP-dependent insertion of CO2 between the N7 and N8 nitrogen atoms of 7,8-diaminopelargonic acid (DAPA, also called 7,8-diammoniononanoate) to form a ureido ring. The sequence is that of ATP-dependent dethiobiotin synthetase BioD from Rhodopseudomonas palustris (strain HaA2).